Consider the following 114-residue polypeptide: Small ribosomal subunit protein bS6 (114 aa).

Belongs to the bacterial ribosomal protein bS6 family.

Functionally, binds together with bS18 to 16S ribosomal RNA. The sequence is that of Small ribosomal subunit protein bS6 from Hydrogenovibrio crunogenus (strain DSM 25203 / XCL-2) (Thiomicrospira crunogena).